Reading from the N-terminus, the 102-residue chain is Putative septation protein SpoVG (102 aa).

The segment at 83-102 is disordered; sequence TDEVIPDKNATSDNEESDEA.

The protein belongs to the SpoVG family.

Its function is as follows. Could be involved in septation. In Staphylococcus epidermidis (strain ATCC 35984 / DSM 28319 / BCRC 17069 / CCUG 31568 / BM 3577 / RP62A), this protein is Putative septation protein SpoVG.